Reading from the N-terminus, the 725-residue chain is Methionine--tRNA ligase (725 aa).

The 'HIGH' region motif lies at 27–37 (PYANGQIHIGH). Zn(2+)-binding residues include C158, C161, C171, and C174. The short motif at 348-352 (KMSKS) is the 'KMSKS' region element. K351 lines the ATP pocket. Residues 619–725 (DFAKIDLRIA…SGAKPGMRVK (107 aa)) enclose the tRNA-binding domain.

The protein belongs to the class-I aminoacyl-tRNA synthetase family. MetG type 1 subfamily. As to quaternary structure, homodimer. The cofactor is Zn(2+).

The protein resides in the cytoplasm. It catalyses the reaction tRNA(Met) + L-methionine + ATP = L-methionyl-tRNA(Met) + AMP + diphosphate. Is required not only for elongation of protein synthesis but also for the initiation of all mRNA translation through initiator tRNA(fMet) aminoacylation. The polypeptide is Methionine--tRNA ligase (Burkholderia pseudomallei (strain 1106a)).